We begin with the raw amino-acid sequence, 188 residues long: Diphosphoinositol polyphosphate phosphohydrolase DDP1 (188 aa).

The segment covering 1-21 (MGKTADNHGPVRSETAREGRE) has biased composition (basic and acidic residues). The interval 1–23 (MGKTADNHGPVRSETAREGRENQ) is disordered. Residues 30–179 (GARLVAGCIC…KRPELLEALN (150 aa)) form the Nudix hydrolase domain. 1D-myo-inositol hexakisphosphate-binding residues include R32, S52, S53, and K63. Residues R32, S52, S53, and K63 each contribute to the 5-diphospho-1D-myo-inositol 1,2,3,4,6-pentakisphosphate site. 4 residues coordinate P(1),P(5)-bis(5'-adenosyl) pentaphosphate: R32, S52, S53, and K63. Residues K63, E80, and E84 each contribute to the Mg(2+) site. A Nudix box motif is present at residues 65–86 (GVEKDEPNYETTAQRETWEEAG). P(1),P(5)-bis(5'-adenosyl) pentaphosphate is bound at residue D100. Residues R102, R129, R152, and R171 each contribute to the 1D-myo-inositol hexakisphosphate site. Position 102 (R102) interacts with 5-diphospho-1D-myo-inositol 1,2,3,4,6-pentakisphosphate. R152 and R171 together coordinate 5-diphospho-1D-myo-inositol 1,2,3,4,6-pentakisphosphate. The P(1),P(5)-bis(5'-adenosyl) pentaphosphate site is built by R152, R171, and E173.

The protein belongs to the Nudix hydrolase family. DIPP subfamily. It depends on Mg(2+) as a cofactor. The cofactor is Mn(2+). Requires Zn(2+) as cofactor.

Its subcellular location is the cytoplasm. It localises to the nucleus. The catalysed reaction is diphospho-myo-inositol polyphosphate + H2O = myo-inositol polyphosphate + phosphate.. The enzyme catalyses P(1),P(6)-bis(5'-adenosyl) hexaphosphate + H2O = adenosine 5'-pentaphosphate + AMP + 2 H(+). It catalyses the reaction P(1),P(5)-bis(5'-adenosyl) pentaphosphate + H2O = adenosine 5'-tetraphosphate + AMP + 2 H(+). It carries out the reaction [phosphate](n+1) + n H2O = (n+1) phosphate + n H(+). May eliminate potentially toxic dinucleoside polyphosphates during sporulation. Most active against diadenosine 5',5'''-P1,P6-hexaphosphate (Ap6A). Can also hydrolyze diadenosine 5',5'''-P1,P5-pentaphosphate (Ap5A), adenosine 5'-pentaphosphate (p5A), and adenosine 5'-tetraphosphate (p4A) are also substrates, but not diadenosine 5',5'''-P1,P4-tetraphosphate (Ap4A) or other dinucleotides, mononucleotides, nucleotide sugars, or nucleotide alcohols. Also cleaves a beta-phosphate from the diphosphate groups in PP-InsP5 (diphosphoinositol pentakisphosphate) and [PP]2-InsP4 (bisdiphosphoinositol tetrakisphosphate). Also has endopolyphosphatase activity. The chain is Diphosphoinositol polyphosphate phosphohydrolase DDP1 (DDP1) from Saccharomyces cerevisiae (strain ATCC 204508 / S288c) (Baker's yeast).